Reading from the N-terminus, the 637-residue chain is SCF-associated factor 1 (637 aa).

One can recognise an F-box domain in the interval 14-63; sequence GLSPDIVQATLPFLSSDDIKNLSQTNKYYNTLLDFDHSKILWHELFHKAF. At Ser16 the chain carries Phosphoserine. Residues 109–202 form an RCC1 1 repeat; it reads AKFYSWGYLK…GFSFQILTES (94 aa). Positions 242–315 are disordered; that stretch reads YPRITSRSNG…RTTMPSMGPH (74 aa). Positions 244 to 260 are enriched in polar residues; the sequence is RITSRSNGSTVNTTGTF. At Ser266 the chain carries Phosphoserine. Residues 289–305 are compositionally biased toward low complexity; the sequence is SGGAPAASPGGSHSGVP. Residues 565–635 form an RCC1 2 repeat; it reads GHLYSWGIES…GWQTGALIIK (71 aa).

In terms of assembly, interacts with AAH1, SKP1 and CDC53. Component of the SCF(SAF1) complex containing CDC53, SKP1, HRT1 and SAF1.

Its pathway is protein modification; protein ubiquitination. In terms of biological role, substrate recognition component of a SCF (SKP1-CUL1-F-box protein) E3 ubiquitin-protein ligase complex which mediates the ubiquitination and subsequent proteasomal degradation of target proteins. Targets AAH1 adenine deaminase for proteasome-dependent degradation upon entry into quiescence. Targets also URA7. The polypeptide is SCF-associated factor 1 (SAF1) (Saccharomyces cerevisiae (strain ATCC 204508 / S288c) (Baker's yeast)).